We begin with the raw amino-acid sequence, 333 residues long: NADH-quinone oxidoreductase subunit H (333 aa).

The next 8 helical transmembrane spans lie at 15 to 35 (IALF…FVTY), 88 to 108 (YVLA…VLPF), 117 to 137 (IGVG…GVVA), 165 to 185 (LVMS…VDIV), 191 to 211 (VWFI…AVAE), 241 to 261 (FFML…TILF), 274 to 294 (IPGA…LIWF), and 313 to 333 (VLLP…AWFF).

Belongs to the complex I subunit 1 family. NDH-1 is composed of 14 different subunits. Subunits NuoA, H, J, K, L, M, N constitute the membrane sector of the complex.

Its subcellular location is the cell membrane. It catalyses the reaction a quinone + NADH + 5 H(+)(in) = a quinol + NAD(+) + 4 H(+)(out). In terms of biological role, NDH-1 shuttles electrons from NADH, via FMN and iron-sulfur (Fe-S) centers, to quinones in the respiratory chain. The immediate electron acceptor for the enzyme in this species is believed to be ubiquinone. Couples the redox reaction to proton translocation (for every two electrons transferred, four hydrogen ions are translocated across the cytoplasmic membrane), and thus conserves the redox energy in a proton gradient. This subunit may bind ubiquinone. The sequence is that of NADH-quinone oxidoreductase subunit H from Geobacillus kaustophilus (strain HTA426).